The following is a 68-amino-acid chain: Large ribosomal subunit protein uL29 (68 aa).

The protein belongs to the universal ribosomal protein uL29 family.

The chain is Large ribosomal subunit protein uL29 from Bradyrhizobium sp. (strain BTAi1 / ATCC BAA-1182).